The chain runs to 214 residues: Large ribosomal subunit protein uL3 (214 aa).

The protein belongs to the universal ribosomal protein uL3 family. Part of the 50S ribosomal subunit. Forms a cluster with proteins L14 and L19.

Its function is as follows. One of the primary rRNA binding proteins, it binds directly near the 3'-end of the 23S rRNA, where it nucleates assembly of the 50S subunit. The sequence is that of Large ribosomal subunit protein uL3 from Streptomyces coelicolor (strain ATCC BAA-471 / A3(2) / M145).